The following is a 101-amino-acid chain: Urease subunit gamma (101 aa).

Belongs to the urease gamma subunit family. Heterotrimer of UreA (gamma), UreB (beta) and UreC (alpha) subunits. Three heterotrimers associate to form the active enzyme.

It localises to the cytoplasm. It catalyses the reaction urea + 2 H2O + H(+) = hydrogencarbonate + 2 NH4(+). The protein operates within nitrogen metabolism; urea degradation; CO(2) and NH(3) from urea (urease route): step 1/1. The polypeptide is Urease subunit gamma (Geobacillus kaustophilus (strain HTA426)).